The primary structure comprises 367 residues: Di-N-acetylchitobiase (367 aa).

An N-terminal signal peptide occupies residues 1-23 (MALSDLLELTLLLLLPLLERLSA). In terms of domain architecture, GH18 spans 24–367 (EDCPCSEASL…EMWGALRPRL (344 aa)). The active-site Proton donor is the Glu-128. N-linked (GlcNAc...) asparagine glycans are attached at residues Asn-178, Asn-213, Asn-247, and Asn-284.

The protein belongs to the glycosyl hydrolase 18 family.

The protein localises to the lysosome. Involved in the degradation of asparagine-linked glycoproteins. Hydrolyze of N-acetyl-beta-D-glucosamine (1-4)N-acetylglucosamine chitobiose core from the reducing end of the bond, it requires prior cleavage by glycosylasparaginase. The polypeptide is Di-N-acetylchitobiase (Ctbs) (Rattus norvegicus (Rat)).